The chain runs to 150 residues: UPF0506 protein SJCHGC03047 (150 aa).

The first 18 residues, Met-1–Ser-18, serve as a signal peptide directing secretion. 3 N-linked (GlcNAc...) asparagine glycosylation sites follow: Asn-20, Asn-48, and Asn-110. Disulfide bonds link Cys-116-Cys-130, Cys-123-Cys-134, and Cys-129-Cys-139.

This sequence belongs to the UPF0506 family.

It is found in the secreted. This chain is UPF0506 protein SJCHGC03047, found in Schistosoma japonicum (Blood fluke).